Consider the following 70-residue polypeptide: UPF0519 protein D (70 aa).

It belongs to the UPF0519 family.

In Dictyostelium discoideum (Social amoeba), this protein is UPF0519 protein D.